Consider the following 194-residue polypeptide: Peptidyl-tRNA hydrolase (194 aa).

Residue Y16 participates in tRNA binding. H21 serves as the catalytic Proton acceptor. TRNA is bound by residues F67, N69, and N115.

Belongs to the PTH family. In terms of assembly, monomer.

The protein localises to the cytoplasm. The enzyme catalyses an N-acyl-L-alpha-aminoacyl-tRNA + H2O = an N-acyl-L-amino acid + a tRNA + H(+). Hydrolyzes ribosome-free peptidyl-tRNAs (with 1 or more amino acids incorporated), which drop off the ribosome during protein synthesis, or as a result of ribosome stalling. Its function is as follows. Catalyzes the release of premature peptidyl moieties from peptidyl-tRNA molecules trapped in stalled 50S ribosomal subunits, and thus maintains levels of free tRNAs and 50S ribosomes. The sequence is that of Peptidyl-tRNA hydrolase from Shigella boydii serotype 4 (strain Sb227).